The following is a 237-amino-acid chain: Ribosomal RNA small subunit methyltransferase G (237 aa).

Residues glycine 78, phenylalanine 83, 129–130, and arginine 148 contribute to the S-adenosyl-L-methionine site; that span reads AE. The tract at residues 218-237 is disordered; it reads KKETPNKYPRKAGMPNKRPL.

Belongs to the methyltransferase superfamily. RNA methyltransferase RsmG family.

It localises to the cytoplasm. Its function is as follows. Specifically methylates the N7 position of a guanine in 16S rRNA. The sequence is that of Ribosomal RNA small subunit methyltransferase G from Streptococcus gordonii (strain Challis / ATCC 35105 / BCRC 15272 / CH1 / DL1 / V288).